A 141-amino-acid chain; its full sequence is Hemoglobin subunit alpha-A (141 aa).

In terms of domain architecture, Globin spans 1–141 (VLSAADKNNV…VGTVLTAKYR (141 aa)). H58 lines the O2 pocket. H87 contacts heme b.

The protein belongs to the globin family. Heterotetramer of two alpha chains and two beta chains. As to expression, red blood cells.

Its function is as follows. Involved in oxygen transport from the lung to the various peripheral tissues. This Phasianus colchicus colchicus (Black-necked pheasant) protein is Hemoglobin subunit alpha-A (HBAA).